The chain runs to 266 residues: Diphthine synthase (266 aa).

S-adenosyl-L-methionine-binding positions include Leu-9, Asp-84, Val-87, 112 to 113 (SI), Leu-169, Ala-210, and His-235.

It belongs to the diphthine synthase family. Homodimer.

The catalysed reaction is 2-[(3S)-amino-3-carboxypropyl]-L-histidyl-[translation elongation factor 2] + 3 S-adenosyl-L-methionine = diphthine-[translation elongation factor 2] + 3 S-adenosyl-L-homocysteine + 3 H(+). It participates in protein modification; peptidyl-diphthamide biosynthesis. Functionally, S-adenosyl-L-methionine-dependent methyltransferase that catalyzes the trimethylation of the amino group of the modified target histidine residue in translation elongation factor 2 (EF-2), to form an intermediate called diphthine. The three successive methylation reactions represent the second step of diphthamide biosynthesis. The polypeptide is Diphthine synthase (Methanosarcina acetivorans (strain ATCC 35395 / DSM 2834 / JCM 12185 / C2A)).